Here is a 113-residue protein sequence, read N- to C-terminus: Large ribosomal subunit protein uL22 (113 aa).

Belongs to the universal ribosomal protein uL22 family. As to quaternary structure, part of the 50S ribosomal subunit.

This protein binds specifically to 23S rRNA; its binding is stimulated by other ribosomal proteins, e.g. L4, L17, and L20. It is important during the early stages of 50S assembly. It makes multiple contacts with different domains of the 23S rRNA in the assembled 50S subunit and ribosome. Its function is as follows. The globular domain of the protein is located near the polypeptide exit tunnel on the outside of the subunit, while an extended beta-hairpin is found that lines the wall of the exit tunnel in the center of the 70S ribosome. The chain is Large ribosomal subunit protein uL22 from Geobacillus sp. (strain WCH70).